Reading from the N-terminus, the 1413-residue chain is DNA-directed RNA polymerase subunit beta' (1413 aa).

Positions 70, 72, 85, and 88 each coordinate Zn(2+). Mg(2+) is bound by residues aspartate 460, aspartate 462, and aspartate 464. Positions 819, 893, 900, and 903 each coordinate Zn(2+).

Belongs to the RNA polymerase beta' chain family. As to quaternary structure, the RNAP catalytic core consists of 2 alpha, 1 beta, 1 beta' and 1 omega subunit. When a sigma factor is associated with the core the holoenzyme is formed, which can initiate transcription. It depends on Mg(2+) as a cofactor. Requires Zn(2+) as cofactor.

It catalyses the reaction RNA(n) + a ribonucleoside 5'-triphosphate = RNA(n+1) + diphosphate. DNA-dependent RNA polymerase catalyzes the transcription of DNA into RNA using the four ribonucleoside triphosphates as substrates. This chain is DNA-directed RNA polymerase subunit beta', found in Burkholderia ambifaria (strain MC40-6).